Here is a 460-residue protein sequence, read N- to C-terminus: UDP-N-acetylmuramate--L-alanine ligase (460 aa).

Residue 112-118 coordinates ATP; it reads GTHGKTT.

This sequence belongs to the MurCDEF family.

The protein localises to the cytoplasm. The catalysed reaction is UDP-N-acetyl-alpha-D-muramate + L-alanine + ATP = UDP-N-acetyl-alpha-D-muramoyl-L-alanine + ADP + phosphate + H(+). Its pathway is cell wall biogenesis; peptidoglycan biosynthesis. In terms of biological role, cell wall formation. This chain is UDP-N-acetylmuramate--L-alanine ligase, found in Pelobacter propionicus (strain DSM 2379 / NBRC 103807 / OttBd1).